We begin with the raw amino-acid sequence, 466 residues long: MKPVALILVFLAISQARVLNLPKEAIDIPVAIVEDKEPPVALSLVKEEVKAEEVKPEEVKPIAQEEKAKDLKEEVKPEIKPEIKEQPKPDIKDEIKEDLKADIKEELKEKIEEQINELPNAKPLELKEKSLEAEEKPQEIKEEVQQPEIKKEATEIKEEPAQNILKSLPAEETVVVPAEELSPNPVEQEQSENQDAAHPQVRQATQATPTQQSTTQGNFVQQLIQNSPIGQFLNQFQPQPAAAAAPAAAQVQADDAAAAAPATPAPTVPGFLNPQAAITSAQQAVQNAAQSAVNATTQAFQGIQQFASNLGNQFQNTLSSLTGQQQQAVSTTPRPPGPIQQFVNNVFGGNNNATAAAPPAQQSGNPLQGIINFLGGNRPQNAPAAAPATQATEKPAVDDKIDPANDEVGEFVPESDNELRASGENIDDSFEDAGVPSNEVIVVNDDAGEEGNAVQNHPVATDAVAL.

Residues 1–16 (MKPVALILVFLAISQA) form the signal peptide. A 1; approximate repeat occupies 48–50 (EVK). The tract at residues 48 to 157 (EVKAEEVKPE…EIKKEATEIK (110 aa)) is 16 X repeats. The stretch at 53-55 (EVK) is one 2; approximate repeat. Positions 55–94 (KPEEVKPIAQEEKAKDLKEEVKPEIKPEIKEQPKPDIKDE) are disordered. The stretch at 58-60 (EVK) is one 3; approximate repeat. The 4; approximate repeat unit spans residues 70-72 (DLK). The stretch at 74-76 (EVK) is one 5; approximate repeat. One copy of the 6; approximate repeat lies at 78 to 80 (EIK). The 7; approximate repeat unit spans residues 82 to 84 (EIK). One copy of the 8; approximate repeat lies at 90-92 (DIK). The 9; approximate repeat unit spans residues 94–96 (EIK). Residues 98–100 (DLK) form a 10; approximate repeat. The 11; approximate repeat unit spans residues 102–104 (DIK). The 12; approximate repeat unit spans residues 106–108 (ELK). Residues 119–220 (PNAKPLELKE…QQSTTQGNFV (102 aa)) are disordered. Residues 124 to 160 (LELKEKSLEAEEKPQEIKEEVQQPEIKKEATEIKEEP) are compositionally biased toward basic and acidic residues. The stretch at 125–127 (ELK) is one 13; approximate repeat. The stretch at 139-141 (EIK) is one 14; approximate repeat. A 15; approximate repeat occupies 148–150 (EIK). One copy of the 16; approximate repeat lies at 155 to 157 (EIK). Residues 170–180 (AEETVVVPAEE) are compositionally biased toward low complexity. The span at 185–194 (PVEQEQSENQ) shows a compositional bias: polar residues. The span at 203–216 (QATQATPTQQSTTQ) shows a compositional bias: low complexity. Residues Asn294 and Asn352 are each glycosylated (N-linked (GlcNAc...) asparagine). Residues 378–435 (RPQNAPAAAPATQATEKPAVDDKIDPANDEVGEFVPESDNELRASGENIDDSFEDAGV) are disordered. Low complexity predominate over residues 379-394 (PQNAPAAAPATQATEK). The span at 404-416 (ANDEVGEFVPESD) shows a compositional bias: acidic residues.

It localises to the secreted. Its function is as follows. Probably has an essential role in embryogenesis, induces morphogenesis of imaginal disks, and may participate in multimolecular aggregates. In Drosophila melanogaster (Fruit fly), this protein is 20-hydroxyecdysone protein (ImpE2).